The following is a 493-amino-acid chain: Ribose import ATP-binding protein RbsA (493 aa).

2 ABC transporter domains span residues 5 to 241 and 252 to 491; these read LKIS…VGRR and EKGE…AAAI. Residue 37–44 coordinates ATP; it reads GENGAGKS.

This sequence belongs to the ABC transporter superfamily. Ribose importer (TC 3.A.1.2.1) family. As to quaternary structure, the complex is composed of an ATP-binding protein (RbsA), two transmembrane proteins (RbsC) and a solute-binding protein (RbsB).

It localises to the cell inner membrane. The catalysed reaction is D-ribose(out) + ATP + H2O = D-ribose(in) + ADP + phosphate + H(+). Its function is as follows. Part of the ABC transporter complex RbsABC involved in ribose import. Responsible for energy coupling to the transport system. The polypeptide is Ribose import ATP-binding protein RbsA (Haemophilus influenzae (strain ATCC 51907 / DSM 11121 / KW20 / Rd)).